The sequence spans 111 residues: Universal stress protein B (111 aa).

2 helical membrane-spanning segments follow: residues 1 to 21 and 90 to 110; these read MIST…NMAR and FILT…LMLW.

Belongs to the universal stress protein B family.

The protein localises to the cell inner membrane. The protein is Universal stress protein B of Yersinia pseudotuberculosis serotype O:1b (strain IP 31758).